The primary structure comprises 167 residues: Peptide deformylase (167 aa).

Residues C91 and H133 each contribute to the Fe cation site. E134 is an active-site residue. H137 contacts Fe cation.

It belongs to the polypeptide deformylase family. The cofactor is Fe(2+).

It carries out the reaction N-terminal N-formyl-L-methionyl-[peptide] + H2O = N-terminal L-methionyl-[peptide] + formate. Its function is as follows. Removes the formyl group from the N-terminal Met of newly synthesized proteins. Requires at least a dipeptide for an efficient rate of reaction. N-terminal L-methionine is a prerequisite for activity but the enzyme has broad specificity at other positions. In Nitrosococcus oceani (strain ATCC 19707 / BCRC 17464 / JCM 30415 / NCIMB 11848 / C-107), this protein is Peptide deformylase.